Here is a 311-residue protein sequence, read N- to C-terminus: Malate dehydrogenase (311 aa).

Residues 7 to 13 (GAAGGIG) and Asp-34 each bind NAD(+). 2 residues coordinate substrate: Arg-81 and Arg-87. NAD(+) is bound by residues Asn-94 and 117–119 (ITN). 2 residues coordinate substrate: Asn-119 and Arg-153. His-177 functions as the Proton acceptor in the catalytic mechanism. Met-227 contacts NAD(+).

This sequence belongs to the LDH/MDH superfamily. MDH type 1 family. In terms of assembly, homodimer.

The catalysed reaction is (S)-malate + NAD(+) = oxaloacetate + NADH + H(+). Catalyzes the reversible oxidation of malate to oxaloacetate. The polypeptide is Malate dehydrogenase (Yersinia enterocolitica serotype O:8 / biotype 1B (strain NCTC 13174 / 8081)).